The sequence spans 443 residues: Chromosomal replication initiator protein DnaA (443 aa).

The segment at 1-76 (METKALWEKL…KSVLNSYVSV (76 aa)) is domain I, interacts with DnaA modulators. The interval 76 to 99 (VDFLTKEIFEKNTKKENKKEPINT) is domain II. The segment at 100-320 (VLSENALTFE…GLVNRLLFFG (221 aa)) is domain III, AAA+ region. ATP contacts are provided by Gly-145, Gly-147, Lys-148, and Thr-149. The interval 321–443 (IQNDLGHIID…ESLKNEIIGK (123 aa)) is domain IV, binds dsDNA.

It belongs to the DnaA family. As to quaternary structure, oligomerizes as a right-handed, spiral filament on DNA at oriC.

The protein resides in the cytoplasm. Plays an essential role in the initiation and regulation of chromosomal replication. ATP-DnaA binds to the origin of replication (oriC) to initiate formation of the DNA replication initiation complex once per cell cycle. Binds the DnaA box (a 9 base pair repeat at the origin) and separates the double-stranded (ds)DNA. Forms a right-handed helical filament on oriC DNA; dsDNA binds to the exterior of the filament while single-stranded (ss)DNA is stabiized in the filament's interior. The ATP-DnaA-oriC complex binds and stabilizes one strand of the AT-rich DNA unwinding element (DUE), permitting loading of DNA polymerase. After initiation quickly degrades to an ADP-DnaA complex that is not apt for DNA replication. Binds acidic phospholipids. This is Chromosomal replication initiator protein DnaA from Mesoplasma florum (strain ATCC 33453 / NBRC 100688 / NCTC 11704 / L1) (Acholeplasma florum).